Consider the following 424-residue polypeptide: Solute carrier family 67 member A1 (424 aa).

10 consecutive transmembrane segments (helical) span residues 26–46 (ILLTYVLAATELTCLFMQFSI), 59–79 (IAFGYLQTTFGVLQLLGGPVF), 90–110 (AALTLSFLAALALYLLLAAAS), 156–176 (LGLCFGVGVILGSLLGGTLVS), 184–204 (AILAALATLLGAVLSFTCIPA), 243–263 (IFLVKVASNCPTGLFMVMFSI), 276–296 (AGYLMSFFGLLQMVTQGLVIG), 312–332 (VLVFIVVGLAMAWMSSVFHFC), 334–354 (LVPGLVFSLCTLNVVTDSMLI), and 391–411 (FGVPVFGHVQVAINTLVLLVL).

Belongs to the major facilitator (TC 2.A.1) superfamily. Organic cation transporter (TC 2.A.1.19) family. As to quaternary structure, interacts with RNF167. Expressed at high levels in adult and fetal kidney and liver, and adult colon. Expressed in fetal renal proximal tubules (at protein level). Expressed at lower levels in heart, brain and lung.

The protein localises to the apical cell membrane. Its function is as follows. May act as a transporter of organic cations based on a proton efflux antiport mechanism. May play a role in the transport of chloroquine and quinidine-related compounds in kidney. Plays a role in the regulation of lipid metabolism. In Homo sapiens (Human), this protein is Solute carrier family 67 member A1.